The chain runs to 342 residues: Endolytic peptidoglycan transglycosylase RlpA (342 aa).

Residues 1-26 form the signal peptide; that stretch reads MSKRVRSSLILPAVCGLGLAAVLLSS. Cys-27 carries N-palmitoyl cysteine lipidation. A lipid anchor (S-diacylglycerol cysteine) is attached at Cys-27. In terms of domain architecture, SPOR spans 261-342; that stretch reads SLPADGLYLQ…LGQPTLVRPD (82 aa).

The protein belongs to the RlpA family.

The protein localises to the cell membrane. Functionally, lytic transglycosylase with a strong preference for naked glycan strands that lack stem peptides. This Pseudomonas aeruginosa (strain ATCC 15692 / DSM 22644 / CIP 104116 / JCM 14847 / LMG 12228 / 1C / PRS 101 / PAO1) protein is Endolytic peptidoglycan transglycosylase RlpA.